A 396-amino-acid chain; its full sequence is Phosphopentomutase (396 aa).

The Mn(2+) site is built by aspartate 14, aspartate 286, histidine 291, aspartate 327, histidine 328, and histidine 339.

This sequence belongs to the phosphopentomutase family. Mn(2+) serves as cofactor.

The protein localises to the cytoplasm. It carries out the reaction 2-deoxy-alpha-D-ribose 1-phosphate = 2-deoxy-D-ribose 5-phosphate. The enzyme catalyses alpha-D-ribose 1-phosphate = D-ribose 5-phosphate. It participates in carbohydrate degradation; 2-deoxy-D-ribose 1-phosphate degradation; D-glyceraldehyde 3-phosphate and acetaldehyde from 2-deoxy-alpha-D-ribose 1-phosphate: step 1/2. Isomerase that catalyzes the conversion of deoxy-ribose 1-phosphate (dRib-1-P) and ribose 1-phosphate (Rib-1-P) to deoxy-ribose 5-phosphate (dRib-5-P) and ribose 5-phosphate (Rib-5-P), respectively. This chain is Phosphopentomutase, found in Staphylococcus epidermidis (strain ATCC 35984 / DSM 28319 / BCRC 17069 / CCUG 31568 / BM 3577 / RP62A).